The chain runs to 123 residues: UPF0102 protein Dole_2298 (123 aa).

Belongs to the UPF0102 family.

The chain is UPF0102 protein Dole_2298 from Desulfosudis oleivorans (strain DSM 6200 / JCM 39069 / Hxd3) (Desulfococcus oleovorans).